We begin with the raw amino-acid sequence, 296 residues long: Small ribosomal subunit biogenesis GTPase RsgA (296 aa).

The CP-type G domain occupies 65–223 (INRIGRPAVA…LADTPGFSSI (159 aa)). Residues 114–117 (SKAD) and 166–174 (GQSGAGKST) each bind GTP. Zn(2+)-binding residues include Cys247, Cys252, His254, and Cys260.

Belongs to the TRAFAC class YlqF/YawG GTPase family. RsgA subfamily. As to quaternary structure, monomer. Associates with 30S ribosomal subunit, binds 16S rRNA. Requires Zn(2+) as cofactor.

The protein localises to the cytoplasm. In terms of biological role, one of several proteins that assist in the late maturation steps of the functional core of the 30S ribosomal subunit. Helps release RbfA from mature subunits. May play a role in the assembly of ribosomal proteins into the subunit. Circularly permuted GTPase that catalyzes slow GTP hydrolysis, GTPase activity is stimulated by the 30S ribosomal subunit. This is Small ribosomal subunit biogenesis GTPase RsgA from Lactobacillus acidophilus (strain ATCC 700396 / NCK56 / N2 / NCFM).